The chain runs to 157 residues: Lipoprotein signal peptidase (157 aa).

4 helical membrane-spanning segments follow: residues 10–30 (LVFI…KHAI), 36–56 (YESL…FSLL), 58–78 (FLEG…FIFL), and 84–104 (LFKN…SNVL). Residues D114 and D131 contribute to the active site. A helical membrane pass occupies residues 122-142 (FDFAIFNFADVMIDVGVGVLL).

Belongs to the peptidase A8 family.

It localises to the cell inner membrane. The catalysed reaction is Release of signal peptides from bacterial membrane prolipoproteins. Hydrolyzes -Xaa-Yaa-Zaa-|-(S,diacylglyceryl)Cys-, in which Xaa is hydrophobic (preferably Leu), and Yaa (Ala or Ser) and Zaa (Gly or Ala) have small, neutral side chains.. It functions in the pathway protein modification; lipoprotein biosynthesis (signal peptide cleavage). This protein specifically catalyzes the removal of signal peptides from prolipoproteins. This Helicobacter pylori (strain P12) protein is Lipoprotein signal peptidase.